The primary structure comprises 135 residues: Small ribosomal subunit protein uS12 (135 aa).

Aspartate 89 bears the 3-methylthioaspartic acid mark. The interval 108-135 (NKRTVSRSKYGTKKAKATDKKATDSKKK) is disordered. The span at 111-122 (TVSRSKYGTKKA) shows a compositional bias: basic residues. Residues 123–135 (KATDKKATDSKKK) are compositionally biased toward basic and acidic residues.

This sequence belongs to the universal ribosomal protein uS12 family. Part of the 30S ribosomal subunit. Contacts proteins S8 and S17. May interact with IF1 in the 30S initiation complex.

In terms of biological role, with S4 and S5 plays an important role in translational accuracy. Interacts with and stabilizes bases of the 16S rRNA that are involved in tRNA selection in the A site and with the mRNA backbone. Located at the interface of the 30S and 50S subunits, it traverses the body of the 30S subunit contacting proteins on the other side and probably holding the rRNA structure together. The combined cluster of proteins S8, S12 and S17 appears to hold together the shoulder and platform of the 30S subunit. The protein is Small ribosomal subunit protein uS12 of Helicobacter pylori (strain HPAG1).